The primary structure comprises 211 residues: Ribonuclease T (211 aa).

An Exonuclease domain is found at 24–198; the sequence is VVVDVETGGF…YDAEKTAHLF (175 aa). Mg(2+)-binding residues include Asp-27, Glu-29, His-185, and Asp-190. His-185 serves as the catalytic Proton donor/acceptor.

The protein belongs to the RNase T family. Homodimer. Requires Mg(2+) as cofactor.

Trims short 3' overhangs of a variety of RNA species, leaving a one or two nucleotide 3' overhang. Responsible for the end-turnover of tRNA: specifically removes the terminal AMP residue from uncharged tRNA (tRNA-C-C-A). Also appears to be involved in tRNA biosynthesis. The polypeptide is Ribonuclease T (Xylella fastidiosa (strain 9a5c)).